A 543-amino-acid polypeptide reads, in one-letter code: Hydroxylamine reductase (543 aa).

[4Fe-4S] cluster contacts are provided by C5, C8, C17, and C23. The hybrid [4Fe-2O-2S] cluster site is built by H236, E260, C304, C398, C426, C451, E486, and K488. C398 carries the post-translational modification Cysteine persulfide.

This sequence belongs to the HCP family. [4Fe-4S] cluster is required as a cofactor. Hybrid [4Fe-2O-2S] cluster serves as cofactor.

It localises to the cytoplasm. The catalysed reaction is A + NH4(+) + H2O = hydroxylamine + AH2 + H(+). Catalyzes the reduction of hydroxylamine to form NH(3) and H(2)O. The sequence is that of Hydroxylamine reductase from Bacteroides fragilis (strain YCH46).